The chain runs to 172 residues: Adenine phosphoribosyltransferase (172 aa).

It belongs to the purine/pyrimidine phosphoribosyltransferase family. Homodimer.

It localises to the cytoplasm. The catalysed reaction is AMP + diphosphate = 5-phospho-alpha-D-ribose 1-diphosphate + adenine. Its pathway is purine metabolism; AMP biosynthesis via salvage pathway; AMP from adenine: step 1/1. Its function is as follows. Catalyzes a salvage reaction resulting in the formation of AMP, that is energically less costly than de novo synthesis. This chain is Adenine phosphoribosyltransferase, found in Streptococcus pyogenes serotype M12 (strain MGAS9429).